Here is a 471-residue protein sequence, read N- to C-terminus: uncharacterized protein (471 aa).

Positions Lys-13–Pro-57 are disordered. Low complexity predominate over residues Ser-27 to Lys-39. Residues Val-40–Leu-50 are compositionally biased toward basic residues. 2 consecutive CCHC-type zinc fingers follow at residues Tyr-397–Gln-414 and Ser-417–Asn-434. The segment at Cys-438–Cys-457 is gag-like cysteine motif.

It to corresponding ORF of B.mori (R1BM).

This is an uncharacterized protein from Drosophila melanogaster (Fruit fly).